Reading from the N-terminus, the 216-residue chain is Type-4 uracil-DNA glycosylase (216 aa).

[4Fe-4S] cluster is bound by residues cysteine 14 and cysteine 17. Uracil-binding positions include 41-43, phenylalanine 55, and asparagine 82; that span reads GEA. Cysteine 86 and cysteine 102 together coordinate [4Fe-4S] cluster. Histidine 164 is a uracil binding site.

The protein belongs to the uracil-DNA glycosylase (UDG) superfamily. Type 4 (UDGa) family. Interacts with the sliding clamp PCNA3 subunit.

The enzyme catalyses Hydrolyzes single-stranded DNA or mismatched double-stranded DNA and polynucleotides, releasing free uracil.. In terms of biological role, removes uracil bases that are present in DNA as a result of either deamination of cytosine or misincorporation of dUMP instead of dTMP. Can remove uracil from double-stranded DNA containing either a U/G or U/A base pair as well as from single-stranded DNA. The polypeptide is Type-4 uracil-DNA glycosylase (Saccharolobus solfataricus (strain ATCC 35092 / DSM 1617 / JCM 11322 / P2) (Sulfolobus solfataricus)).